Here is a 227-residue protein sequence, read N- to C-terminus: Probable septum site-determining protein MinC (227 aa).

It belongs to the MinC family. In terms of assembly, interacts with MinD and FtsZ.

Functionally, cell division inhibitor that blocks the formation of polar Z ring septums. Rapidly oscillates between the poles of the cell to destabilize FtsZ filaments that have formed before they mature into polar Z rings. Prevents FtsZ polymerization. This is Probable septum site-determining protein MinC from Acetivibrio thermocellus (strain ATCC 27405 / DSM 1237 / JCM 9322 / NBRC 103400 / NCIMB 10682 / NRRL B-4536 / VPI 7372) (Clostridium thermocellum).